The primary structure comprises 977 residues: Protein bric-a-brac 1 (977 aa).

The segment at 1-97 (MASAQAETNV…RSSSVASPSS (97 aa)) is disordered. The span at 34–43 (PKSNRSSPTQ) shows a compositional bias: polar residues. A compositionally biased stretch (basic and acidic residues) spans 44–69 (QEEKRIKSEDRTSPTGGAKDEDKESQ). A compositionally biased stretch (low complexity) spans 80–97 (SPVSSPQGRSSSVASPSS). The 66-residue stretch at 127–192 (VDVTLACDGR…MYRGEINVSQ (66 aa)) folds into the BTB domain. Disordered regions lie at residues 221 to 249 (AAAA…HDRE), 281 to 348 (ERQQ…GSTV), 362 to 434 (DMPS…RFPL), and 447 to 497 (SGLG…ADDL). Residues 316–330 (ERMELEQKERERQRD) are compositionally biased toward basic and acidic residues. The segment covering 372–396 (PLSRSSRPHSQSPQQQQAQQQGQLP) has biased composition (low complexity). The segment covering 469–491 (GGGVGGGGVGGGGAGGVGSGGGS) has biased composition (gly residues). Positions 559–611 (FRERGPLKSWRPETMAEAIFSVLKEGLSLSQAARKYDIPYPTFVLYANRVHNM) constitute an HTH psq-type domain. The H-T-H motif DNA-binding region spans 569-614 (RPETMAEAIFSVLKEGLSLSQAARKYDIPYPTFVLYANRVHNMLGP). The segment at residues 621-632 (DLRPKGRGRPQR) is a DNA-binding region (a.T hook). Disordered stretches follow at residues 772 to 900 (ASIS…LGDL) and 925 to 977 (VGAS…TTSE). 4 stretches are compositionally biased toward low complexity: residues 804–816 (MAVA…QQQA), 838–853 (QQQQ…GGHQ), 862–872 (ASSSSSASSSS), and 925–966 (VGAS…SSGG).

Leg imaginal disk at the central region of the tarsus and in eye antenna disk at the basal cylinder.

The protein localises to the nucleus. In terms of biological role, probably acts as a transcriptional regulator. Required for the specification of the tarsal segment. Also involved in antenna development. This Drosophila melanogaster (Fruit fly) protein is Protein bric-a-brac 1 (bab1).